Here is a 398-residue protein sequence, read N- to C-terminus: DNA-directed RNA polymerase III subunit RPC4 (398 aa).

The interval 1 to 114 (MSEGNAAGEP…SHSIFEQGPA (114 aa)) is disordered. Serine 2 is modified (N-acetylserine). A Phosphoserine modification is found at serine 42. Residues 66–100 (KIKEEPKEEVTVKKEKRERDRDRQREGHGRGRGRP) are compositionally biased toward basic and acidic residues. Glycyl lysine isopeptide (Lys-Gly) (interchain with G-Cter in SUMO2) cross-links involve residues lysine 68 and lysine 78. An omega-N-methylarginine mark is found at arginine 95, arginine 97, and arginine 99. Residues lysine 141, lysine 152, lysine 160, lysine 190, lysine 199, lysine 206, lysine 220, lysine 285, lysine 302, lysine 310, and lysine 396 each participate in a glycyl lysine isopeptide (Lys-Gly) (interchain with G-Cter in SUMO2) cross-link. Residues 220-244 (KEEPRDEEEEAKMKAPPKAARKTPG) form a disordered region.

This sequence belongs to the eukaryotic RPC4/POLR3D RNA polymerase subunit family. As to quaternary structure, component of the RNA polymerase III complex consisting of 17 subunits: a ten-subunit horseshoe-shaped catalytic core composed of POLR3A/RPC1, POLR3B/RPC2, POLR1C/RPAC1, POLR1D/RPAC2, POLR3K/RPC10, POLR2E/RPABC1, POLR2F/RPABC2, POLR2H/RPABC3, POLR2K/RPABC4 and POLR2L/RPABC5; a mobile stalk composed of two subunits POLR3H/RPC8 and CRCP/RPC9, protruding from the core and functioning primarily in transcription initiation; and additional subunits homologous to general transcription factors of the RNA polymerase II machinery, POLR3C/RPC3-POLR3F/RPC6-POLR3G/RPC7 heterotrimer required for transcription initiation and POLR3D/RPC4-POLR3E/RPC5 heterodimer involved in both transcription initiation and termination. In terms of processing, sumoylation on Lys-141 can serve as a signal to mark misfolded Pol III for proteasomal degradation.

The protein localises to the nucleus. Functionally, DNA-dependent RNA polymerase catalyzes the transcription of DNA into RNA using the four ribonucleoside triphosphates as substrates. Specific peripheric component of RNA polymerase III (Pol III) which synthesizes small non-coding RNAs including 5S rRNA, snRNAs, tRNAs and miRNAs from at least 500 distinct genomic loci. Assembles with POLR3E/RPC5 forming a subcomplex that binds the Pol III core. Enables recruitment of Pol III at transcription initiation site and drives transcription initiation from both type 2 and type 3 DNA promoters. Required for efficient transcription termination and reinitiation. Pol III plays a key role in sensing and limiting infection by intracellular bacteria and DNA viruses. Acts as nuclear and cytosolic DNA sensor involved in innate immune response. Can sense non-self dsDNA that serves as template for transcription into dsRNA. The non-self RNA polymerase III transcripts, such as Epstein-Barr virus-encoded RNAs (EBERs) induce type I interferon and NF-kappa-B through the RIG-I pathway. This chain is DNA-directed RNA polymerase III subunit RPC4, found in Homo sapiens (Human).